The primary structure comprises 171 residues: Ribosome maturation factor RimM (171 aa).

Residues 97–169 (DGEFYYHEII…RVDVSIMEGL (73 aa)) enclose the PRC barrel domain.

This sequence belongs to the RimM family. Binds ribosomal protein uS19.

It localises to the cytoplasm. Functionally, an accessory protein needed during the final step in the assembly of 30S ribosomal subunit, possibly for assembly of the head region. Essential for efficient processing of 16S rRNA. May be needed both before and after RbfA during the maturation of 16S rRNA. It has affinity for free ribosomal 30S subunits but not for 70S ribosomes. This chain is Ribosome maturation factor RimM, found in Lactococcus lactis subsp. lactis (strain IL1403) (Streptococcus lactis).